We begin with the raw amino-acid sequence, 305 residues long: tRNA N6-adenosine threonylcarbamoyltransferase (305 aa).

Residues histidine 108 and histidine 112 each contribute to the Fe cation site. Residues valine 130 to glycine 134, aspartate 163, glycine 176, aspartate 180, and asparagine 264 each bind substrate. Aspartate 288 lines the Fe cation pocket.

It belongs to the KAE1 / TsaD family. Requires Fe(2+) as cofactor.

It is found in the cytoplasm. The enzyme catalyses L-threonylcarbamoyladenylate + adenosine(37) in tRNA = N(6)-L-threonylcarbamoyladenosine(37) in tRNA + AMP + H(+). Required for the formation of a threonylcarbamoyl group on adenosine at position 37 (t(6)A37) in tRNAs that read codons beginning with adenine. Is involved in the transfer of the threonylcarbamoyl moiety of threonylcarbamoyl-AMP (TC-AMP) to the N6 group of A37, together with TsaE and TsaB. TsaD likely plays a direct catalytic role in this reaction. The protein is tRNA N6-adenosine threonylcarbamoyltransferase of Mycoplasma mobile (strain ATCC 43663 / 163K / NCTC 11711) (Mesomycoplasma mobile).